A 529-amino-acid polypeptide reads, in one-letter code: Aldehyde dehydrogenase 1 (529 aa).

251–256 is a binding site for NAD(+); it reads GSTYVG. Active-site residues include Glu-273 and Cys-307.

It belongs to the aldehyde dehydrogenase family.

The catalysed reaction is an aldehyde + NAD(+) + H2O = a carboxylate + NADH + 2 H(+). This chain is Aldehyde dehydrogenase 1, found in Entamoeba histolytica (strain ATCC 30459 / HM-1:IMSS / ABRM).